Reading from the N-terminus, the 223-residue chain is Small ribosomal subunit protein uS3 (223 aa).

Residues 38–106 form the KH type-2 domain; it reads IREFIAKQLT…RVHINIVEIK (69 aa).

Belongs to the universal ribosomal protein uS3 family. In terms of assembly, part of the 30S ribosomal subunit. Forms a tight complex with proteins S10 and S14.

Binds the lower part of the 30S subunit head. Binds mRNA in the 70S ribosome, positioning it for translation. This is Small ribosomal subunit protein uS3 from Pediococcus pentosaceus (strain ATCC 25745 / CCUG 21536 / LMG 10740 / 183-1w).